The sequence spans 465 residues: Sensor histidine kinase ZraS (465 aa).

Topologically, residues 1 to 14 are cytoplasmic; it reads MSFIRLHKDAAAMW. Residues 15–35 form a helical membrane-spanning segment; that stretch reads LSRLLPAAIFILVGLFSIMVI. Topologically, residues 36–203 are periplasmic; that stretch reads RDYGRESAAA…ATQAREWRNT (168 aa). The chain crosses the membrane as a helical span at residues 204–224; sequence LIVLSALAAVLLATLLAFFWY. Over 225 to 465 the chain is Cytoplasmic; the sequence is QRYQRSHREL…WLPVIARQQD (241 aa). The region spanning 253–461 is the Histidine kinase domain; sequence GVAHEIRNPL…VFTIWLPVIA (209 aa). Position 256 is a phosphohistidine; by autocatalysis (His-256).

Post-translationally, autophosphorylated.

Its subcellular location is the cell inner membrane. It carries out the reaction ATP + protein L-histidine = ADP + protein N-phospho-L-histidine.. Its activity is regulated as follows. Activity of the ZraS/ZraR two-component system is repressed by the zinc-bound form of ZraP, which probably interacts with the periplasmic region of ZraS. Part of the Zra signaling pathway, an envelope stress response (ESR) system composed of the periplasmic accessory protein ZraP, the histidine kinase ZraS and the transcriptional regulator ZraR. The ZraPSR system contributes to antibiotic resistance and is important for membrane integrity in the presence of membrane-targeting biocides. ZraS is a member of the two-component regulatory system ZraS/ZraR. Functions as a membrane-associated sensor kinase that phosphorylates ZraR in response to high concentrations of Zn(2+) or Pb(2+) in the medium. In Salmonella typhi, this protein is Sensor histidine kinase ZraS (zraS).